A 328-amino-acid chain; its full sequence is DNA-directed RNA polymerase subunit alpha (328 aa).

Residues 1 to 234 (MQNSTTEFLK…DQMSIFADLQ (234 aa)) form an alpha N-terminal domain (alpha-NTD) region. Residues 248-328 (IDPVLLRPVD…AWPPVGLEKP (81 aa)) form an alpha C-terminal domain (alpha-CTD) region.

It belongs to the RNA polymerase alpha chain family. Homodimer. The RNAP catalytic core consists of 2 alpha, 1 beta, 1 beta' and 1 omega subunit. When a sigma factor is associated with the core the holoenzyme is formed, which can initiate transcription.

The enzyme catalyses RNA(n) + a ribonucleoside 5'-triphosphate = RNA(n+1) + diphosphate. DNA-dependent RNA polymerase catalyzes the transcription of DNA into RNA using the four ribonucleoside triphosphates as substrates. The sequence is that of DNA-directed RNA polymerase subunit alpha from Neisseria meningitidis serogroup A / serotype 4A (strain DSM 15465 / Z2491).